The sequence spans 359 residues: Phospho-N-acetylmuramoyl-pentapeptide-transferase (359 aa).

Helical transmembrane passes span 27–47 (IGAA…FIRT), 71–91 (VPTM…LLWA), 93–113 (LDNP…MIGA), 134–154 (LLLQ…HPGY), 170–190 (LGWF…NAVN), 203–223 (MVVS…VVLA), 234–254 (SGEL…FLWF), 262–282 (FMGD…AIII), 286–306 (FLLA…MLQV), and 336–356 (KVVV…IATL).

This sequence belongs to the glycosyltransferase 4 family. MraY subfamily. Mg(2+) serves as cofactor.

It localises to the cell inner membrane. The enzyme catalyses UDP-N-acetyl-alpha-D-muramoyl-L-alanyl-gamma-D-glutamyl-meso-2,6-diaminopimeloyl-D-alanyl-D-alanine + di-trans,octa-cis-undecaprenyl phosphate = di-trans,octa-cis-undecaprenyl diphospho-N-acetyl-alpha-D-muramoyl-L-alanyl-D-glutamyl-meso-2,6-diaminopimeloyl-D-alanyl-D-alanine + UMP. Its pathway is cell wall biogenesis; peptidoglycan biosynthesis. Functionally, catalyzes the initial step of the lipid cycle reactions in the biosynthesis of the cell wall peptidoglycan: transfers peptidoglycan precursor phospho-MurNAc-pentapeptide from UDP-MurNAc-pentapeptide onto the lipid carrier undecaprenyl phosphate, yielding undecaprenyl-pyrophosphoryl-MurNAc-pentapeptide, known as lipid I. In Desulfotalea psychrophila (strain LSv54 / DSM 12343), this protein is Phospho-N-acetylmuramoyl-pentapeptide-transferase.